The sequence spans 360 residues: Phospho-N-acetylmuramoyl-pentapeptide-transferase (360 aa).

Helical transmembrane passes span isoleucine 27 to tryptophan 47, threonine 73 to leucine 93, threonine 94 to valine 114, tryptophan 132 to glycine 152, valine 168 to serine 188, glycine 199 to threonine 219, alanine 236 to phenylalanine 256, valine 263 to leucine 283, phenylalanine 288 to valine 308, and valine 338 to lysine 358.

This sequence belongs to the glycosyltransferase 4 family. MraY subfamily. Mg(2+) serves as cofactor.

It is found in the cell inner membrane. The catalysed reaction is UDP-N-acetyl-alpha-D-muramoyl-L-alanyl-gamma-D-glutamyl-meso-2,6-diaminopimeloyl-D-alanyl-D-alanine + di-trans,octa-cis-undecaprenyl phosphate = di-trans,octa-cis-undecaprenyl diphospho-N-acetyl-alpha-D-muramoyl-L-alanyl-D-glutamyl-meso-2,6-diaminopimeloyl-D-alanyl-D-alanine + UMP. The protein operates within cell wall biogenesis; peptidoglycan biosynthesis. Its function is as follows. Catalyzes the initial step of the lipid cycle reactions in the biosynthesis of the cell wall peptidoglycan: transfers peptidoglycan precursor phospho-MurNAc-pentapeptide from UDP-MurNAc-pentapeptide onto the lipid carrier undecaprenyl phosphate, yielding undecaprenyl-pyrophosphoryl-MurNAc-pentapeptide, known as lipid I. The sequence is that of Phospho-N-acetylmuramoyl-pentapeptide-transferase from Aliivibrio fischeri (strain MJ11) (Vibrio fischeri).